Reading from the N-terminus, the 706-residue chain is Triadin (706 aa).

The interval 1-28 (MTEITAEGNASTTTTVIDSKNGSVPKSP) is disordered. Residues 1-47 (MTEITAEGNASTTTTVIDSKNGSVPKSPGKVLKRTVTEDLVTTFSSP) are Cytoplasmic-facing. Residues 8-24 (GNASTTTTVIDSKNGSV) show a composition bias toward polar residues. The helical transmembrane segment at 48–68 (AAWLLVIALIITWSAVAVVMF) threads the bilayer. The Lumenal segment spans residues 69-706 (DLVDYKNFSA…GKPNSPGPKQ (638 aa)). Asn-75 is a glycosylation site (N-linked (GlcNAc...) asparagine). The span at 117-127 (DGDEEDDEGDE) shows a compositional bias: acidic residues. Disordered regions lie at residues 117–265 (DGDE…EQKD), 281–663 (DLKP…KKQK), and 684–706 (FPVT…GPKQ). 7 stretches are compositionally biased toward basic and acidic residues: residues 128–254 (DTAK…ESKE), 309–358 (PEEK…KSPD), 372–432 (TKKD…KEEV), 443–518 (AKKE…EVKP), 525–552 (IKKE…EKVL), 570–588 (KKAE…DKPK), and 599–621 (ESGK…RESH). N-linked (GlcNAc...) asparagine glycosylation occurs at Asn-625. Basic and acidic residues predominate over residues 628–651 (KAEKPARGSKEGFEDVPASKKAKE).

As to quaternary structure, interacts with CASQ2. Homooligomer of variable subunit number; disulfide-linked. Interacts with CASQ1 and RYR1 in skeletal muscle. Post-translationally, phosphorylated by CaMK2. In terms of processing, N-glycosylated. Detected in skeletal muscle and in heart (at protein level). Detected in skeletal muscle and in heart.

It is found in the sarcoplasmic reticulum membrane. In terms of biological role, contributes to the regulation of lumenal Ca2+ release via the sarcoplasmic reticulum calcium release channels RYR1 and RYR2, a key step in triggering skeletal and heart muscle contraction. Required for normal organization of the triad junction, where T-tubules and the sarcoplasmic reticulum terminal cisternae are in close contact. Required for normal skeletal muscle strength. Plays a role in excitation-contraction coupling in the heart and in regulating the rate of heart beats. The polypeptide is Triadin (TRDN) (Oryctolagus cuniculus (Rabbit)).